The following is a 529-amino-acid chain: Meiosis 1 arrest protein (529 aa).

Disordered regions lie at residues 180-201 (KGIQ…DESS) and 504-529 (AASK…PSHT). A compositionally biased stretch (polar residues) spans 188 to 200 (SPSPTEEPSNDES). Phosphoserine is present on Ser-516.

Expressed in germ cells of the testis. Expressed from spermatogonia to spermatids. Expressed at very low levels in lung, stomach, thymus. Not detected in Sertoli cells.

The protein resides in the cytoplasm. Functionally, required for meiosis I progression during spermatogenesis. The protein is Meiosis 1 arrest protein (M1ap) of Mus musculus (Mouse).